We begin with the raw amino-acid sequence, 445 residues long: Putative H/ACA ribonucleoprotein complex subunit 4 (445 aa).

The tract at residues 1–32 (MGKKDKRSKLEGDELAEAQQKGSFQLPSSNET) is disordered. Residues 20–32 (QKGSFQLPSSNET) show a composition bias toward polar residues. Residue Asp113 is the Nucleophile of the active site. The 76-residue stretch at 284-359 (HKRVVVKDSC…IVAKSKRVIM (76 aa)) folds into the PUA domain. Residues 407 to 445 (TDKVKKEQEDKEDEEEEEAPKKKSKKAAKKEVSSSSDSE) form a disordered region.

It belongs to the pseudouridine synthase TruB family. As to quaternary structure, component of the small nucleolar ribonucleoprotein particle containing H/ACA-type snoRNAs (H/ACA snoRNPs).

The protein resides in the nucleus. It is found in the nucleolus. It catalyses the reaction a uridine in RNA = a pseudouridine in RNA. Plays a central role in ribosomal RNA processing. Probable catalytic subunit of H/ACA small nucleolar ribonucleoprotein (H/ACA snoRNP) complex, which catalyzes pseudouridylation of rRNA. This involves the isomerization of uridine such that the ribose is subsequently attached to C5, instead of the normal N1. Pseudouridine ('psi') residues may serve to stabilize the conformation of rRNAs. The polypeptide is Putative H/ACA ribonucleoprotein complex subunit 4 (Caenorhabditis briggsae).